A 373-amino-acid chain; its full sequence is Queuine tRNA-ribosyltransferase (373 aa).

Asp90 (proton acceptor) is an active-site residue. Substrate contacts are provided by residues 90-94 (DSGGF), Asp144, Gln193, and Gly220. Residues 251-257 (GVGTPED) form an RNA binding region. Catalysis depends on Asp270, which acts as the Nucleophile. The segment at 275-279 (TRNAR) is RNA binding; important for wobble base 34 recognition. Zn(2+)-binding residues include Cys308, Cys310, Cys313, and His339.

The protein belongs to the queuine tRNA-ribosyltransferase family. Homodimer. Within each dimer, one monomer is responsible for RNA recognition and catalysis, while the other monomer binds to the replacement base PreQ1. Requires Zn(2+) as cofactor.

The enzyme catalyses 7-aminomethyl-7-carbaguanine + guanosine(34) in tRNA = 7-aminomethyl-7-carbaguanosine(34) in tRNA + guanine. It functions in the pathway tRNA modification; tRNA-queuosine biosynthesis. Functionally, catalyzes the base-exchange of a guanine (G) residue with the queuine precursor 7-aminomethyl-7-deazaguanine (PreQ1) at position 34 (anticodon wobble position) in tRNAs with GU(N) anticodons (tRNA-Asp, -Asn, -His and -Tyr). Catalysis occurs through a double-displacement mechanism. The nucleophile active site attacks the C1' of nucleotide 34 to detach the guanine base from the RNA, forming a covalent enzyme-RNA intermediate. The proton acceptor active site deprotonates the incoming PreQ1, allowing a nucleophilic attack on the C1' of the ribose to form the product. After dissociation, two additional enzymatic reactions on the tRNA convert PreQ1 to queuine (Q), resulting in the hypermodified nucleoside queuosine (7-(((4,5-cis-dihydroxy-2-cyclopenten-1-yl)amino)methyl)-7-deazaguanosine). This Campylobacter jejuni subsp. jejuni serotype O:2 (strain ATCC 700819 / NCTC 11168) protein is Queuine tRNA-ribosyltransferase.